The chain runs to 197 residues: Rac-like GTP-binding protein RHO1 (197 aa).

Glycine 13–threonine 20 serves as a coordination point for GTP. Positions tyrosine 35–phenylalanine 43 match the Effector region motif. GTP-binding positions include aspartate 60 to glutamine 64 and threonine 118 to aspartate 121. A Cysteine methyl ester modification is found at cysteine 194. Residue cysteine 194 is the site of S-geranylgeranyl cysteine attachment. Positions serine 195 to leucine 197 are cleaved as a propeptide — removed in mature form.

This sequence belongs to the small GTPase superfamily. Rho family. In terms of tissue distribution, expressed at the tip of pollen tubes.

The protein resides in the cytoplasm. The protein localises to the membrane. Inactive GDP-bound Rho GTPases reside in the cytosol, are found in a complex with Rho GDP-dissociation inhibitors (Rho GDIs), and are released from the GDI protein in order to translocate to membranes upon activation. May be involved in cell polarity control during the actin-dependent tip growth of pollen tubes. This Pisum sativum (Garden pea) protein is Rac-like GTP-binding protein RHO1 (RHO1).